Reading from the N-terminus, the 417-residue chain is NADH-quinone oxidoreductase subunit D (417 aa).

Belongs to the complex I 49 kDa subunit family. In terms of assembly, NDH-1 is composed of 14 different subunits. Subunits NuoB, C, D, E, F, and G constitute the peripheral sector of the complex.

It localises to the cell inner membrane. It catalyses the reaction a quinone + NADH + 5 H(+)(in) = a quinol + NAD(+) + 4 H(+)(out). In terms of biological role, NDH-1 shuttles electrons from NADH, via FMN and iron-sulfur (Fe-S) centers, to quinones in the respiratory chain. The immediate electron acceptor for the enzyme in this species is believed to be ubiquinone. Couples the redox reaction to proton translocation (for every two electrons transferred, four hydrogen ions are translocated across the cytoplasmic membrane), and thus conserves the redox energy in a proton gradient. This is NADH-quinone oxidoreductase subunit D from Coxiella burnetii (strain Dugway 5J108-111).